The chain runs to 686 residues: Soluble guanylate cyclase gcy-34 (686 aa).

Residue histidine 105 participates in heme binding. Coiled coils occupy residues 306-335 and 398-432; these read KKHMNAMTKEEREQEVEAMEEEVESNELTQ and VEVNLQLEANNEQLETMTHELEVERQKTDSILKDM. The 129-residue stretch at 455–583 folds into the Guanylate cyclase domain; it reads TVMFCDLPAF…ETVTLASQME (129 aa). 2 residues coordinate Mg(2+): aspartate 460 and aspartate 504.

It belongs to the adenylyl cyclase class-4/guanylyl cyclase family. In terms of assembly, heterodimer; with other soluble guanylate cyclases. Requires heme as cofactor. Expressed in a small number of neurons, corresponding to URX, AQR and PQR neurons.

The protein localises to the cytoplasm. The catalysed reaction is GTP = 3',5'-cyclic GMP + diphosphate. May be regulated by molecular oxygen. Probably not activated by nitric oxide (NO). Its function is as follows. Synthesizes cyclic GMP (cGMP) from GTP. May be involved in sensitivity to quinine by regulating egl-4 activity through the production of cGMP. This is Soluble guanylate cyclase gcy-34 (gcy-34) from Caenorhabditis elegans.